Here is a 187-residue protein sequence, read N- to C-terminus: Peroxisome assembly protein 22 (187 aa).

A helical membrane pass occupies residues 7–29; it reads NTFFGLAALGALGLGYSVYKSFI.

The protein belongs to the peroxin-22 family. As to quaternary structure, interacts with PEX4.

It is found in the peroxisome membrane. Functionally, involved in peroxisome biogenesis. The sequence is that of Peroxisome assembly protein 22 (PEX22) from Komagataella pastoris (Yeast).